The sequence spans 111 residues: V-type proton ATPase subunit G 2 (111 aa).

It belongs to the V-ATPase G subunit family. As to quaternary structure, V-ATPase is a heteromultimeric enzyme composed of a peripheral catalytic V1 complex (components A to H) attached to an integral membrane V0 proton pore complex (components: a, c, c', c'' and d).

Its function is as follows. Catalytic subunit of the peripheral V1 complex of vacuolar ATPase (V-ATPase). V-ATPase is responsible for acidifying a variety of intracellular compartments in eukaryotic cells. The sequence is that of V-type proton ATPase subunit G 2 (VATG2) from Nicotiana tabacum (Common tobacco).